The sequence spans 566 residues: Berberine bridge enzyme-like D-2 (566 aa).

The signal sequence occupies residues 1–33 (MKRNISMSLQRLLIILMMISFLFTSLLVPSVSA). A disulfide bridge connects residues Cys-42 and Cys-103. Asn-50 is a glycosylation site (N-linked (GlcNAc...) asparagine). In terms of domain architecture, FAD-binding PCMH-type spans 81–257 (SKPKPTVIIV…YAWKIRLLKV (177 aa)). The residue at position 118 (His-118) is a Pros-8alpha-FAD histidine. Asn-364, Asn-378, and Asn-503 each carry an N-linked (GlcNAc...) asparagine glycan.

This sequence belongs to the oxygen-dependent FAD-linked oxidoreductase family. FAD is required as a cofactor.

It is found in the vacuole. Its pathway is alkaloid biosynthesis; nicotine biosynthesis. Involved in the biosynthesis of pyridine alkaloid natural products, leading mainly to the production of anabasine, anatabine, nicotine and nornicotine, effective deterrents against herbivores with antiparasitic and pesticide properties (neurotoxins); nornicotine serves as the precursor in the synthesis of the carcinogen compound N'-nitrosonornicotine (NNN). Catalyzes a late oxidation step subsequent to the pyridine ring condensation reaction in the biosynthesis of alkaloids. The polypeptide is Berberine bridge enzyme-like D-2 (Nicotiana tabacum (Common tobacco)).